The sequence spans 110 residues: Large ribosomal subunit protein uL22 (110 aa).

It belongs to the universal ribosomal protein uL22 family. Part of the 50S ribosomal subunit.

In terms of biological role, this protein binds specifically to 23S rRNA; its binding is stimulated by other ribosomal proteins, e.g. L4, L17, and L20. It is important during the early stages of 50S assembly. It makes multiple contacts with different domains of the 23S rRNA in the assembled 50S subunit and ribosome. The globular domain of the protein is located near the polypeptide exit tunnel on the outside of the subunit, while an extended beta-hairpin is found that lines the wall of the exit tunnel in the center of the 70S ribosome. The protein is Large ribosomal subunit protein uL22 of Colwellia psychrerythraea (strain 34H / ATCC BAA-681) (Vibrio psychroerythus).